Consider the following 149-residue polypeptide: NPC intracellular cholesterol transporter 2 (149 aa).

A signal peptide spans 1-19 (MRFLAATILLLALVAASQA). Disulfide bonds link cysteine 27/cysteine 140, cysteine 42/cysteine 47, and cysteine 93/cysteine 99. N-linked (GlcNAc...) asparagine glycosylation is found at asparagine 58 and asparagine 69. Lysine 116 bears the N6-acetyllysine mark.

This sequence belongs to the NPC2 family. In terms of assembly, interacts with NPC1 (via the second lumenal domain) in a cholestrol-dependent manner. Interacts with NUS1/NgBR, the interaction stabilizes NCP2 and regulates cholesterol trafficking. Interacts with DHDDS. Interacts with NEDD4L (via C2 domain). Interacts with NPC1L1. In terms of processing, N-glycosylated. Detected in liver and bile. Detected in epididymis (at protein level). Detected in caput epididymis, corpus epididymis, cauda epididymis and ovary.

Its subcellular location is the secreted. The protein resides in the endoplasmic reticulum. It localises to the lysosome. It catalyses the reaction cholesterol(in) = cholesterol(out). Intracellular cholesterol transporter which acts in concert with NPC1 and plays an important role in the egress of cholesterol from the lysosomal compartment. Unesterified cholesterol that has been released from LDLs in the lumen of the late endosomes/lysosomes is transferred by NPC2 to the cholesterol-binding pocket in the N-terminal domain of NPC1. May bind and mobilize cholesterol that is associated with membranes. NPC2 binds cholesterol with a 1:1 stoichiometry. Can bind a variety of sterols, including lathosterol, desmosterol and the plant sterols stigmasterol and beta-sitosterol. The secreted form of NCP2 regulates biliary cholesterol secretion via stimulation of ABCG5/ABCG8-mediated cholesterol transport. This Mus musculus (Mouse) protein is NPC intracellular cholesterol transporter 2.